Here is a 732-residue protein sequence, read N- to C-terminus: Protein FAR1-RELATED SEQUENCE 4 (732 aa).

One can recognise an FAR1 domain in the interval Leu-11–Pro-97. Positions Val-212–Pro-308 constitute an MULE domain. The SWIM-type zinc finger occupies Tyr-490–Gly-526. The disordered stretch occupies residues Gln-623–Gly-683. Over residues Glu-624–Ile-635 the composition is skewed to polar residues.

Belongs to the FHY3/FAR1 family. As to expression, expressed in hypocotyls, rosette and cauline leaves, inflorescences stems, flowers and siliques.

The protein resides in the nucleus. Functionally, putative transcription activator involved in regulating light control of development. The protein is Protein FAR1-RELATED SEQUENCE 4 (FRS4) of Arabidopsis thaliana (Mouse-ear cress).